Reading from the N-terminus, the 512-residue chain is FAD-dependent monooxygenase prx3 (512 aa).

Residues 1–19 (MLSLKAFLALSLSIHLSQG) form the signal peptide. Residues 63-235 (CQTTPTCVFA…TRFDLATFSV (173 aa)) enclose the FAD-binding PCMH-type domain. His100 is modified (pros-8alpha-FAD histidine). N-linked (GlcNAc...) asparagine glycans are attached at residues Asn197, Asn281, Asn307, Asn329, Asn361, and Asn477.

This sequence belongs to the oxygen-dependent FAD-linked oxidoreductase family.

Its pathway is sesquiterpene biosynthesis. Its function is as follows. FAD-dependent monooxygenase; part of the gene cluster that mediates the biosynthesis of PR-toxin, a bicyclic sesquiterpene belonging to the eremophilane class and acting as a mycotoxin. The first step of the pathway is catalyzed by the aristolochene synthase which performs the cyclization of trans,trans-farnesyl diphosphate (FPP) to the bicyclic sesquiterpene aristolochene. Following the formation of aristolochene, the non-oxygenated aristolochene is converted to the trioxygenated intermediate eremofortin B, via 7-epi-neopetasone. This conversion appears to involve three enzymes, a hydroxysterol oxidase-like enzyme, the quinone-oxidase prx3 that forms the quinone-type-structure in the bicyclic nucleus of aristolochene with the C8-oxo group and the C-3 hydroxyl group, and the P450 monooxygenase ORF6 that introduces the epoxide at the double bond between carbons 1 and 2. No monoxy or dioxy-intermediates have been reported to be released to the broth, so these three early oxidative reactions may be coupled together. Eremofortin B is further oxidized by another P450 monooxygenase, that introduces a second epoxide between carbons 7 and 11 prior to acetylation to eremofortin A by the acetyltransferase ORF8. The second epoxidation may be performed by a second P450 monooxygenase. After the acetylation step, eremofortin A is converted to eremofortin C and then to PR-toxin. First the conversion of eremofortin A to eremofortin C proceeds by oxidation of the side chain of the molecule at C-12 and is catalyzed by the short-chain oxidoreductase prx1. The cytochrome P450 monooxygenase ORF6 is probably also involved in this step. The primary alcohol formed at C-12 is finally oxidized by the short-chain alcohol dehydrogenase prx4 that forms PR-toxin. The chain is FAD-dependent monooxygenase prx3 from Penicillium roqueforti (strain FM164).